The following is a 211-amino-acid chain: Troponin I, cardiac muscle (211 aa).

The tract at residues 1-23 is disordered; it reads MADESGDAAGCPPPAPAPIRRQS. Residue Ala2 is modified to N-acetylalanine. Residue Ser5 is modified to Phosphoserine. Residues Ser23 and Ser24 each carry the phosphoserine; by PKA and PKD/PRKD1 modification. Tyr27 carries the post-translational modification Phosphotyrosine. Phosphothreonine; by STK4/MST1 is present on Thr32. Positions 33-80 are involved in binding TNC; the sequence is EPHAKKKSKISASRKLQLKTLMLQIAKQELEREAEERRGEKGRALSTR. Ser43 and Ser45 each carry phosphoserine; by PKC/PRKCE. Thr52 carries the phosphothreonine; by STK4/MST1 modification. Ser78 is subject to Phosphoserine. At Thr79 the chain carries Phosphothreonine. Thr130 and Thr144 each carry phosphothreonine; by STK4/MST1. The segment at 130–150 is involved in binding TNC and actin; the sequence is TQKIFDLRGKFKRPTLRRVRI. Ser151 bears the Phosphoserine; by PAK3 mark. At Ser167 the chain carries Phosphoserine. Thr182 bears the Phosphothreonine mark. Ser200 carries the phosphoserine modification.

Belongs to the troponin I family. As to quaternary structure, binds to actin and tropomyosin. Interacts with TRIM63. Interacts with STK4/MST1. In terms of processing, phosphorylated at Ser-23 and Ser-24 by PRKD1; phosphorylation reduces myofilament calcium sensitivity. Phosphorylated preferentially at Thr-32. Phosphorylation by STK4/MST1 alters its binding affinity to TNNC1 (cardiac Tn-C) and TNNT2 (cardiac Tn-T). Phosphorylated at Ser-43 and Ser-45 by PRKCE; phosphorylation increases myocardium contractile dysfunction.

Troponin I is the inhibitory subunit of troponin, the thin filament regulatory complex which confers calcium-sensitivity to striated muscle actomyosin ATPase activity. The sequence is that of Troponin I, cardiac muscle (TNNI3) from Canis lupus familiaris (Dog).